We begin with the raw amino-acid sequence, 118 residues long: Ribonuclease P protein component (118 aa).

The protein belongs to the RnpA family. As to quaternary structure, consists of a catalytic RNA component (M1 or rnpB) and a protein subunit.

It catalyses the reaction Endonucleolytic cleavage of RNA, removing 5'-extranucleotides from tRNA precursor.. Its function is as follows. RNaseP catalyzes the removal of the 5'-leader sequence from pre-tRNA to produce the mature 5'-terminus. It can also cleave other RNA substrates such as 4.5S RNA. The protein component plays an auxiliary but essential role in vivo by binding to the 5'-leader sequence and broadening the substrate specificity of the ribozyme. The polypeptide is Ribonuclease P protein component (Shewanella baltica (strain OS155 / ATCC BAA-1091)).